A 603-amino-acid chain; its full sequence is DNA mismatch repair protein MutL (603 aa).

Basic and acidic residues predominate over residues 336-346 (EVSKKQKEQQK). 2 disordered regions span residues 336–355 (EVSKKQKEQQKSEQIQMSFE) and 361–384 (KETPTLFSKPNVPEYVPSDEDTSR).

The protein belongs to the DNA mismatch repair MutL/HexB family.

Its function is as follows. This protein is involved in the repair of mismatches in DNA. It is required for dam-dependent methyl-directed DNA mismatch repair. May act as a 'molecular matchmaker', a protein that promotes the formation of a stable complex between two or more DNA-binding proteins in an ATP-dependent manner without itself being part of a final effector complex. This is DNA mismatch repair protein MutL from Listeria welshimeri serovar 6b (strain ATCC 35897 / DSM 20650 / CCUG 15529 / CIP 8149 / NCTC 11857 / SLCC 5334 / V8).